Reading from the N-terminus, the 91-residue chain is Thioredoxin (91 aa).

A Thioredoxin domain is found at 2 to 91 (SDSIVHVTDD…SRQSEVEATK (90 aa)). C33 and C36 form a disulfide bridge.

This sequence belongs to the thioredoxin family.

Participates in various redox reactions through the reversible oxidation of its active center dithiol to a disulfide and catalyzes dithiol-disulfide exchange reactions. This chain is Thioredoxin (trxA), found in Thiocapsa roseopersicina.